Consider the following 170-residue polypeptide: 3-hydroxyanthranilate 3,4-dioxygenase (170 aa).

R44 provides a ligand contact to O2. Residues H48, E54, and H92 each coordinate Fe cation. Residue E54 participates in substrate binding. 2 residues coordinate substrate: R96 and E106. Residues C121, C124, C158, and C161 each contribute to the a divalent metal cation site.

This sequence belongs to the 3-HAO family. The cofactor is Fe(2+).

Its subcellular location is the cytoplasm. It carries out the reaction 3-hydroxyanthranilate + O2 = (2Z,4Z)-2-amino-3-carboxymuconate 6-semialdehyde. The protein operates within cofactor biosynthesis; NAD(+) biosynthesis; quinolinate from L-kynurenine: step 3/3. Its function is as follows. Catalyzes the oxidative ring opening of 3-hydroxyanthranilate to 2-amino-3-carboxymuconate semialdehyde, which spontaneously cyclizes to quinolinate. This is 3-hydroxyanthranilate 3,4-dioxygenase from Scheffersomyces stipitis (strain ATCC 58785 / CBS 6054 / NBRC 10063 / NRRL Y-11545) (Yeast).